An 858-amino-acid chain; its full sequence is Low-density lipoprotein receptor-related protein 12 (858 aa).

An N-terminal signal peptide occupies residues 1 to 32 (MARRWSTKESQRRGSAWLLLFLAGVYGNGALA). Residues 33 to 492 (ELSENVHISG…ENCPVIVPTR (460 aa)) lie on the Extracellular side of the membrane. Cystine bridges form between Cys47/Cys76, Cys103/Cys122, Cys166/Cys178, Cys173/Cys191, Cys185/Cys200, Cys215/Cys232, Cys222/Cys245, Cys239/Cys254, and Cys259/Cys285. Positions 47–159 (CGESPEQIRA…KGFRLAYFSG (113 aa)) constitute a CUB 1 domain. Asn75 is a glycosylation site (N-linked (GlcNAc...) asparagine). LDL-receptor class A domains lie at 165 to 201 (DCAC…EVCA) and 214 to 255 (PCAY…IDCD). The 114-residue stretch at 259 to 372 (CGQWLKYFYG…RGFNATYQVD (114 aa)) folds into the CUB 2 domain. Asn284 and Asn366 each carry an N-linked (GlcNAc...) asparagine glycan. LDL-receptor class A domains follow at residues 374 to 411 (FCLP…INCT), 412 to 449 (MCQK…KNCF), and 450 to 486 (FCQP…ENCP). Intrachain disulfides connect Cys375/Cys388, Cys382/Cys401, Cys395/Cys410, Cys413/Cys426, Cys420/Cys439, Cys433/Cys448, Cys451/Cys463, Cys458/Cys476, and Cys470/Cys485. The N-linked (GlcNAc...) asparagine glycan is linked to Asn409. An N-linked (GlcNAc...) asparagine glycan is attached at Asn441. A helical transmembrane segment spans residues 493–513 (VITAAVIGSLICGLLLVIALG). Topologically, residues 514–858 (CTCKLYSLRM…TSDDEALLLC (345 aa)) are cytoplasmic. 2 disordered regions span residues 619 to 721 (ALVS…VSPA) and 746 to 767 (SSST…SGRE). Over residues 712–721 (SVEAPSVSPA) the composition is skewed to low complexity. Positions 746–755 (SSSTTQNRSP) are enriched in polar residues.

It belongs to the LDLR family. In terms of assembly, may interact with RACK1, ZFYVE9 and NMRK2.

It localises to the membrane. The protein resides in the coated pit. Functionally, probable receptor, which may be involved in the internalization of lipophilic molecules and/or signal transduction. May act as a tumor suppressor. This Mus musculus (Mouse) protein is Low-density lipoprotein receptor-related protein 12 (Lrp12).